Reading from the N-terminus, the 141-residue chain is VLSASDKANVKAVFGKIGGQAEEFGAETLERMFATYPQTKTYFPHFDLGKGSAQVKGHGKKVAAALVEAANHVDDIAGALSKLSDLHAQKLRVDPVNFKLLGQCFLVVVASHNPALLTPEVHASLDKFLCAVGTVLTAKYR.

Residues 1 to 141 (VLSASDKANV…VGTVLTAKYR (141 aa)) form the Globin domain. Position 58 (His58) interacts with O2. A heme b-binding site is contributed by His87.

The protein belongs to the globin family. Heterotetramer of two alpha chains and two beta chains. In terms of tissue distribution, red blood cells.

Its function is as follows. Involved in oxygen transport from the lung to the various peripheral tissues. This chain is Hemoglobin subunit alpha-A (HBAA), found in Sturnus vulgaris (Starling).